The sequence spans 251 residues: Protein DEEPER ROOTING 1 (251 aa).

An IGT motif motif is present at residues 46–52 (SLLAIGT). Positions 64–105 (VENSSDNVQSVQDTVKFTEEEVDKIRKEFETLLAIKDQAEAQ) form a coiled coil.

Belongs to the LAZY family.

Its function is as follows. Involved in the control of root growth angle. Involved in cell elongation in the root tip that causes asymmetric root growth and downward bending of the root in response to gravity. The chain is Protein DEEPER ROOTING 1 from Oryza sativa subsp. japonica (Rice).